Consider the following 362-residue polypeptide: Ferredoxin--NADP reductase, leaf isozyme 1, chloroplastic (362 aa).

The N-terminal 62 residues, 1–62 (MAAVTAAAVS…DAAAVAAAPA (62 aa)), are a transit peptide targeting the chloroplast. One can recognise an FAD-binding FR-type domain in the interval 83–205 (KEPYVGKCLL…TGPVGKEMLM (123 aa)). FAD-binding positions include 141–144 (RLYS), 162–164 (CVK), Y168, 179–181 (VCS), and T220. NADP(+) is bound by residues S144 and K164. C180 and C185 are oxidised to a cystine. The residue at position 181 (S181) is a Phosphoserine. Residues T220, 252–253 (VP), 282–283 (SR), K292, 321–322 (GL), and E360 each bind NADP(+).

Belongs to the ferredoxin--NADP reductase type 1 family. In terms of assembly, component of high molecular weight thylakoid LFNRs-containing protein complexes containing LIR1, LFNR1, LFNR2, TIC62 and TROL proteins. Interacts directly with LIR1 and TIC62; LIR1 increases the affinity of LFNR1 and LFNR2 for TIC62. FAD is required as a cofactor. In terms of processing, may form interchain disulfide bonds with LIR1.

It localises to the plastid. The protein localises to the chloroplast stroma. It is found in the chloroplast thylakoid membrane. The enzyme catalyses 2 reduced [2Fe-2S]-[ferredoxin] + NADP(+) + H(+) = 2 oxidized [2Fe-2S]-[ferredoxin] + NADPH. The protein operates within energy metabolism; photosynthesis. In terms of biological role, may play a key role in regulating the relative amounts of cyclic and non-cyclic electron flow to meet the demands of the plant for ATP and reducing power. The chain is Ferredoxin--NADP reductase, leaf isozyme 1, chloroplastic from Oryza sativa subsp. japonica (Rice).